The sequence spans 201 residues: Recombination protein RecR (201 aa).

A C4-type zinc finger spans residues 59-74 (CEICGNMDTENICRIC). The Toprim domain occupies 82–177 (SIIAIVETVA…KISRLASGIP (96 aa)).

It belongs to the RecR family.

In terms of biological role, may play a role in DNA repair. It seems to be involved in an RecBC-independent recombinational process of DNA repair. It may act with RecF and RecO. This is Recombination protein RecR from Rickettsia rickettsii (strain Iowa).